Consider the following 230-residue polypeptide: Iron-dependent repressor IdeR (230 aa).

In terms of domain architecture, HTH dtxR-type spans 4–65; sequence LVDTTEMYLR…VAGDRHLELT (62 aa).

Belongs to the DtxR/MntR family. Homodimer.

The protein resides in the cytoplasm. Functionally, metal-dependent DNA-binding protein that controls transcription of many genes involved in iron metabolism. The polypeptide is Iron-dependent repressor IdeR (ideR) (Mycobacterium bovis (strain ATCC BAA-935 / AF2122/97)).